The chain runs to 53 residues: Rho GTPase-activating protein 6 (53 aa).

The protein localises to the cytoplasm. In terms of biological role, GTPase activator for the Rho-type GTPases by converting them to an inactive GDP-bound state. Could regulate the interactions of signaling molecules with the actin cytoskeleton. Promotes continuous elongation of cytoplasmic processes during cell motility and simultaneous retraction of the cell body changing the cell morphology. The protein is Rho GTPase-activating protein 6 (arhgap6) of Takifugu rubripes (Japanese pufferfish).